An 83-amino-acid chain; its full sequence is Cytochrome b559 subunit alpha (83 aa).

The chain crosses the membrane as a helical span at residues 21-35; it reads VIHSITIPSLFIAGW. His-23 lines the heme pocket.

Belongs to the PsbE/PsbF family. As to quaternary structure, heterodimer of an alpha subunit and a beta subunit. PSII is composed of 1 copy each of membrane proteins PsbA, PsbB, PsbC, PsbD, PsbE, PsbF, PsbH, PsbI, PsbJ, PsbK, PsbL, PsbM, PsbT, PsbX, PsbY, PsbZ, Psb30/Ycf12, at least 3 peripheral proteins of the oxygen-evolving complex and a large number of cofactors. It forms dimeric complexes. The cofactor is heme b.

It localises to the plastid. It is found in the chloroplast thylakoid membrane. This b-type cytochrome is tightly associated with the reaction center of photosystem II (PSII). PSII is a light-driven water:plastoquinone oxidoreductase that uses light energy to abstract electrons from H(2)O, generating O(2) and a proton gradient subsequently used for ATP formation. It consists of a core antenna complex that captures photons, and an electron transfer chain that converts photonic excitation into a charge separation. This Physcomitrium patens (Spreading-leaved earth moss) protein is Cytochrome b559 subunit alpha.